The primary structure comprises 175 residues: NADH-ubiquinone oxidoreductase chain 6 (175 aa).

Transmembrane regions (helical) follow at residues 1 to 21 (MMMYIVFILSIIFVISFVGVS), 25 to 45 (SPIYGGLGLIVGGGVGCGVIL), 47 to 67 (FGGSFLGLMVFLIYLGGMLVV), 88 to 108 (VVLGAFVLGLVVEFLIVIYAL), and 149 to 169 (YGVWLVIVTGWSLFISVVIIM).

Belongs to the complex I subunit 6 family. In terms of assembly, core subunit of respiratory chain NADH dehydrogenase (Complex I) which is composed of 45 different subunits.

The protein localises to the mitochondrion inner membrane. It carries out the reaction a ubiquinone + NADH + 5 H(+)(in) = a ubiquinol + NAD(+) + 4 H(+)(out). Core subunit of the mitochondrial membrane respiratory chain NADH dehydrogenase (Complex I) which catalyzes electron transfer from NADH through the respiratory chain, using ubiquinone as an electron acceptor. Essential for the catalytic activity and assembly of complex I. This is NADH-ubiquinone oxidoreductase chain 6 (MT-ND6) from Balaenoptera physalus (Fin whale).